A 103-amino-acid polypeptide reads, in one-letter code: Large ribosomal subunit protein bL21 (103 aa).

It belongs to the bacterial ribosomal protein bL21 family. In terms of assembly, part of the 50S ribosomal subunit. Contacts protein L20.

This protein binds to 23S rRNA in the presence of protein L20. This chain is Large ribosomal subunit protein bL21, found in Shewanella baltica (strain OS223).